Consider the following 357-residue polypeptide: SrfA-induced gene J protein (357 aa).

Positions 1–29 are disordered; the sequence is MGRVEDQIKDNYNSLSHEGERLNREAKIE. A coiled-coil region spans residues 5 to 51; sequence EDQIKDNYNSLSHEGERLNREAKIESEKLKNNAKLDAKDMKKDIDES. The span at 17-29 shows a compositional bias: basic and acidic residues; sequence HEGERLNREAKIE. 3 N-linked (GlcNAc...) asparagine glycosylation sites follow: Asn-114, Asn-157, and Asn-172. Coiled-coil stretches lie at residues 150-177 and 223-270; these read KNFK…SNKI and DETK…DAIE. The helical transmembrane segment at 290–307 threads the bilayer; it reads IWGSIGLIGGATATSYLF.

Its subcellular location is the membrane. This Dictyostelium discoideum (Social amoeba) protein is SrfA-induced gene J protein (sigJ).